The primary structure comprises 842 residues: Envelope glycoprotein gp160 (842 aa).

The N-terminal stretch at 1–23 (MGMKSGWLLFYLLVSLIKVIGSE) is a signal peptide. The Extracellular segment spans residues 24–663 (QHWVTVYYGV…ITKWLWYIKI (640 aa)). The cysteines at positions 45 and 65 are disulfide-linked. Residues asparagine 79, asparagine 123, asparagine 131, asparagine 134, asparagine 149, asparagine 153, asparagine 181, asparagine 190, asparagine 225, asparagine 229, asparagine 234, asparagine 255, asparagine 267, asparagine 278, asparagine 284, asparagine 290, asparagine 320, asparagine 331, and asparagine 345 are each glycosylated (N-linked (GlcNAc...) asparagine; by host). 5 cysteine pairs are disulfide-bonded: cysteine 110–cysteine 198, cysteine 117–cysteine 189, cysteine 122–cysteine 150, cysteine 211–cysteine 240, and cysteine 221–cysteine 232. Residues 122 to 149 (CNDSYGEERNNTNMTTREPDIGYKQMKN) are V1. The segment at 150-189 (CSFNATTELTDKKKQVYSLFYVEDVVPINAYNKTYRLINC) is V2. The tract at residues 285-318 (CTRPGNNTGGQVQIGPAMTFYNIEKIVGDIRQAY) is V3. Residues cysteine 285 and cysteine 319 are joined by a disulfide bond. The CD4-binding loop stretch occupies residues 353-363 (RNEGDLEVTHL). 2 cysteine pairs are disulfide-bonded: cysteine 367/cysteine 423 and cysteine 374/cysteine 396. The tract at residues 374–396 (CNTSKLFNEELLNETGEPITLPC) is V4. Asparagine 375, asparagine 386, asparagine 422, and asparagine 426 each carry an N-linked (GlcNAc...) asparagine; by host glycan. 2 V5 regions span residues 439–448 (DTKETIVYPS) and 441–448 (KETIVYPS). The segment at 489–510 (AAFGLGALFLGFLGAAGSTMGA) is fusion peptide. The tract at residues 552-570 (KQLQAKVLAIERYLRDQQI) is immunosuppression. A disulfide bridge connects residues cysteine 576 and cysteine 582. N-linked (GlcNAc...) asparagine; by host glycans are attached at residues asparagine 589, asparagine 594, asparagine 595, asparagine 604, and asparagine 616. Positions 612–646 (EKVRNYSGVIFGLIEQAQEQQNTNEKSLLELDQWD) form a coiled coil. The interval 641–662 (ELDQWDSLWSWFGITKWLWYIK) is MPER; binding to GalCer. The chain crosses the membrane as a helical span at residues 664-684 (AIMIVAGIVGIRIISIVITII). Residues 685–842 (ARVRQGYSPL…IRQGLERALI (158 aa)) lie on the Cytoplasmic side of the membrane. The YXXL motif; contains endocytosis signal motif lies at 691–694 (YSPL).

Belongs to the HIV-1 env protein family. In terms of assembly, the mature envelope protein (Env) consists of a homotrimer of non-covalently associated gp120-gp41 heterodimers. The resulting complex protrudes from the virus surface as a spike. There seems to be as few as 10 spikes on the average virion. Interacts with host CD4, CCR5 and CXCR4. Gp120 also interacts with the C-type lectins CD209/DC-SIGN and CLEC4M/DC-SIGNR (collectively referred to as DC-SIGN(R)). Gp120 and gp41 interact with GalCer. Gp120 interacts with host ITGA4/ITGB7 complex; on CD4+ T-cells, this interaction results in rapid activation of integrin ITGAL/LFA-1, which facilitates efficient cell-to-cell spreading of HIV-1. Gp120 interacts with cell-associated heparan sulfate; this interaction increases virus infectivity on permissive cells and may be involved in infection of CD4- cells. As to quaternary structure, the mature envelope protein (Env) consists of a homotrimer of non-covalently associated gp120-gp41 heterodimers. The resulting complex protrudes from the virus surface as a spike. There seems to be as few as 10 spikes on the average virion. Post-translationally, highly glycosylated by host. The high number of glycan on the protein is reffered to as 'glycan shield' because it contributes to hide protein sequence from adaptive immune system. Palmitoylation of the transmembrane protein and of Env polyprotein (prior to its proteolytic cleavage) is essential for their association with host cell membrane lipid rafts. Palmitoylation is therefore required for envelope trafficking to classical lipid rafts, but not for viral replication. In terms of processing, specific enzymatic cleavages in vivo yield mature proteins. Envelope glycoproteins are synthesized as an inactive precursor that is heavily N-glycosylated and processed likely by host cell furin in the Golgi to yield the mature SU and TM proteins. The cleavage site between SU and TM requires the minimal sequence [KR]-X-[KR]-R. About 2 of the 9 disulfide bonds of gp41 are reduced by P4HB/PDI, following binding to CD4 receptor.

The protein resides in the virion membrane. It is found in the host cell membrane. It localises to the host endosome membrane. In terms of biological role, oligomerizes in the host endoplasmic reticulum into predominantly trimers. In a second time, gp160 transits in the host Golgi, where glycosylation is completed. The precursor is then proteolytically cleaved in the trans-Golgi and thereby activated by cellular furin or furin-like proteases to produce gp120 and gp41. Functionally, attaches the virus to the host lymphoid cell by binding to the primary receptor CD4. This interaction induces a structural rearrangement creating a high affinity binding site for a chemokine coreceptor like CXCR4 and/or CCR5. Acts as a ligand for CD209/DC-SIGN and CLEC4M/DC-SIGNR, which are respectively found on dendritic cells (DCs), and on endothelial cells of liver sinusoids and lymph node sinuses. These interactions allow capture of viral particles at mucosal surfaces by these cells and subsequent transmission to permissive cells. HIV subverts the migration properties of dendritic cells to gain access to CD4+ T-cells in lymph nodes. Virus transmission to permissive T-cells occurs either in trans (without DCs infection, through viral capture and transmission), or in cis (following DCs productive infection, through the usual CD4-gp120 interaction), thereby inducing a robust infection. In trans infection, bound virions remain infectious over days and it is proposed that they are not degraded, but protected in non-lysosomal acidic organelles within the DCs close to the cell membrane thus contributing to the viral infectious potential during DCs' migration from the periphery to the lymphoid tissues. On arrival at lymphoid tissues, intact virions recycle back to DCs' cell surface allowing virus transmission to CD4+ T-cells. Acts as a class I viral fusion protein. Under the current model, the protein has at least 3 conformational states: pre-fusion native state, pre-hairpin intermediate state, and post-fusion hairpin state. During fusion of viral and target intracellular membranes, the coiled coil regions (heptad repeats) assume a trimer-of-hairpins structure, positioning the fusion peptide in close proximity to the C-terminal region of the ectodomain. The formation of this structure appears to drive apposition and subsequent fusion of viral and target cell membranes. Complete fusion occurs in host cell endosomes and is dynamin-dependent, however some lipid transfer might occur at the plasma membrane. The virus undergoes clathrin-dependent internalization long before endosomal fusion, thus minimizing the surface exposure of conserved viral epitopes during fusion and reducing the efficacy of inhibitors targeting these epitopes. Membranes fusion leads to delivery of the nucleocapsid into the cytoplasm. This is Envelope glycoprotein gp160 from Human immunodeficiency virus type 1 group N (isolate YBF30) (HIV-1).